Here is a 517-residue protein sequence, read N- to C-terminus: uncharacterized protein (517 aa).

10 consecutive transmembrane segments (helical) span residues 35-55, 81-101, 102-122, 135-155, 164-184, 223-243, 268-288, 302-322, 328-348, and 352-372; these read FSLIVLSFIVSFFLIVAIPGI, IAIYTLAALAFSFCMSVGVFN, IGISGQMMAGANFGFMMILKV, IITILLMILGSVTVAMVVAAL, VVSAIMLNWVIVLVSAYLVGT, LVIAIAAAIFIAVLMKFTVFG, FLSFVISGILSGLLAAVVYTA, FGITSVPITGFDGIAIGLIAL, IVIVSTIISFVTIGAKPAGLN, and ASLVLGIMMYFAAIYNLMIYI.

It localises to the cell membrane. This is an uncharacterized protein from Mycoplasma pneumoniae (strain ATCC 29342 / M129 / Subtype 1) (Mycoplasmoides pneumoniae).